Here is a 203-residue protein sequence, read N- to C-terminus: Guanylate kinase (203 aa).

A Guanylate kinase-like domain is found at 3–181; that stretch reads GTLYIVSAPS…ALDDLKAIFR (179 aa). ATP is bound at residue 10 to 17; sequence APSGAGKT.

Belongs to the guanylate kinase family.

It localises to the cytoplasm. It carries out the reaction GMP + ATP = GDP + ADP. Essential for recycling GMP and indirectly, cGMP. The protein is Guanylate kinase (gmk) of Pseudomonas aeruginosa (strain ATCC 15692 / DSM 22644 / CIP 104116 / JCM 14847 / LMG 12228 / 1C / PRS 101 / PAO1).